The chain runs to 164 residues: Large ribosomal subunit protein eL24 (164 aa).

Disordered regions lie at residues 63–82 (KDAAQEAVKKRRRATKKPYS) and 117–164 (ERIK…GGKA). Positions 71 to 81 (KKRRRATKKPY) are enriched in basic residues. The segment covering 117-133 (ERIKKTKDEKKAKKAEV) has biased composition (basic and acidic residues).

It belongs to the eukaryotic ribosomal protein eL24 family.

Its subcellular location is the cytoplasm. This is Large ribosomal subunit protein eL24 (RPL24) from Cicer arietinum (Chickpea).